A 532-amino-acid polypeptide reads, in one-letter code: Probable bifunctional tRNA threonylcarbamoyladenosine biosynthesis protein (532 aa).

The interval 1 to 323 is kae1; that stretch reads MRVLGVEGTA…FRPDEVSVTW (323 aa). Fe cation contacts are provided by H107 and H111. Residues 128-132, D160, G173, E177, and N256 contribute to the L-threonylcarbamoyladenylate site; that span reads NASGA. D284 contacts Fe cation. In terms of domain architecture, Protein kinase spans 329–532; that stretch reads PARDPGADAV…GRYQDDPETA (204 aa). ATP is bound by residues 338–346 and K355; that span reads VRQGAEATV. The active-site Proton acceptor; for kinase activity is the D444.

It in the N-terminal section; belongs to the KAE1 / TsaD family. In the C-terminal section; belongs to the protein kinase superfamily. Tyr protein kinase family. BUD32 subfamily. As to quaternary structure, component of the KEOPS complex that consists of Kae1, Bud32, Cgi121 and Pcc1; the whole complex dimerizes. The cofactor is Fe(2+).

It localises to the cytoplasm. It carries out the reaction L-seryl-[protein] + ATP = O-phospho-L-seryl-[protein] + ADP + H(+). The catalysed reaction is L-threonyl-[protein] + ATP = O-phospho-L-threonyl-[protein] + ADP + H(+). The enzyme catalyses L-threonylcarbamoyladenylate + adenosine(37) in tRNA = N(6)-L-threonylcarbamoyladenosine(37) in tRNA + AMP + H(+). Functionally, required for the formation of a threonylcarbamoyl group on adenosine at position 37 (t(6)A37) in tRNAs that read codons beginning with adenine. Is a component of the KEOPS complex that is probably involved in the transfer of the threonylcarbamoyl moiety of threonylcarbamoyl-AMP (TC-AMP) to the N6 group of A37. The Kae1 domain likely plays a direct catalytic role in this reaction. The Bud32 domain probably displays kinase activity that regulates Kae1 function. This chain is Probable bifunctional tRNA threonylcarbamoyladenosine biosynthesis protein, found in Halobacterium salinarum (strain ATCC 700922 / JCM 11081 / NRC-1) (Halobacterium halobium).